We begin with the raw amino-acid sequence, 458 residues long: MKASKGRNVVVVGTQWGDEGKGKLVDWLTESAQGVVRFQGGHNAGHTLVINGVKTALHLIPSGIMRPGVKCYIGNGVVLSAGKLFEEIEGLEKAGVEVRSRLRVSEACPLILPFHAALDVAREAAREHGGAEKIGTTGRGIGPAYEDKIARRALRVQDLKYPERFAAKLRELLALHNHVLSTFLGSANFQFGDALKPYITGGQVQFEPVFEEAMRHAEMLKPMMADVSRELNEAHAAGANLLFEGAQGTLLDVDHGTYPYVTSSNCVAGNAAAGSGVGPGHLHYILGITKAYCTRVGGGPFPTELDWETPGTPGYHMSTVGAEKGVTTGRSRRCGWFDAALLKRSAQVNGLSGLCITKLDVLDGLRELSLCVGYELDGERIDLLPMGAEEIARCVPIYENIAGWTESTVGVTHYENLPSNARRYLERIEQVTGVPIAMISTSPDRDHTILMRHPYAAD.

GTP contacts are provided by residues 17–23 and 45–47; these read GDEGKGK and GHT. Asp-18 acts as the Proton acceptor in catalysis. Mg(2+) is bound by residues Asp-18 and Gly-45. IMP is bound by residues 18–21, 43–46, Thr-137, Arg-151, Gln-247, Thr-262, and Arg-330; these read DEGK and NAGH. The active-site Proton donor is His-46. 326-332 provides a ligand contact to substrate; sequence VTTGRSR. GTP-binding positions include Arg-332, 358-360, and 440-442; these read KLD and STS.

Belongs to the adenylosuccinate synthetase family. As to quaternary structure, homodimer. The cofactor is Mg(2+).

The protein localises to the cytoplasm. The enzyme catalyses IMP + L-aspartate + GTP = N(6)-(1,2-dicarboxyethyl)-AMP + GDP + phosphate + 2 H(+). It functions in the pathway purine metabolism; AMP biosynthesis via de novo pathway; AMP from IMP: step 1/2. Functionally, plays an important role in the de novo pathway of purine nucleotide biosynthesis. Catalyzes the first committed step in the biosynthesis of AMP from IMP. This Acidovorax sp. (strain JS42) protein is Adenylosuccinate synthetase.